The following is a 118-amino-acid chain: MQTLDPVDAASLRDDVPAFRPGDTLKVHVKVVEGARSRIQVFQGVVIARAGGGVRETFTIRKVSFGVGVERIFPVHSPSIDHIEVVTRGDVRRAKLYYLRSLRGKAAKIKEKRETPVG.

It belongs to the bacterial ribosomal protein bL19 family.

Functionally, this protein is located at the 30S-50S ribosomal subunit interface and may play a role in the structure and function of the aminoacyl-tRNA binding site. The chain is Large ribosomal subunit protein bL19 from Beutenbergia cavernae (strain ATCC BAA-8 / DSM 12333 / CCUG 43141 / JCM 11478 / NBRC 16432 / NCIMB 13614 / HKI 0122).